The sequence spans 401 residues: Probable aspartic-type endopeptidase TRV_05382 (401 aa).

Positions 1–22 (MWHSPFFTAFTLFLGFFTLTLA) are cleaved as a signal peptide. 2 N-linked (GlcNAc...) asparagine glycosylation sites follow: N80 and N102. Positions 94–398 (FVNEITIGNN…DHDGPKMGFA (305 aa)) constitute a Peptidase A1 domain. The active site involves D110. N282 is a glycosylation site (N-linked (GlcNAc...) asparagine). Residue D292 is part of the active site. N-linked (GlcNAc...) asparagine glycosylation is present at N329.

This sequence belongs to the peptidase A1 family.

The protein localises to the secreted. Functionally, probable aspartic-type endopeptidase which contributes to virulence. The sequence is that of Probable aspartic-type endopeptidase TRV_05382 from Trichophyton verrucosum (strain HKI 0517).